Consider the following 120-residue polypeptide: Immunoglobulin kappa variable 2D-28 (120 aa).

The N-terminal stretch at Met-1–Ser-19 is a signal peptide. The Ig-like domain occupies Gly-20–Pro-120. The framework-1 stretch occupies residues Asp-21–Cys-43. A disulfide bond links Cys-43 and Cys-113. Residues Arg-44–Asp-59 form a complementarity-determining-1 region. The tract at residues Trp-60 to Tyr-74 is framework-2. The complementarity-determining-2 stretch occupies residues Leu-75–Ser-81. The interval Gly-82–Cys-113 is framework-3. A complementarity-determining-3 region spans residues Met-114–Pro-120.

As to quaternary structure, immunoglobulins are composed of two identical heavy chains and two identical light chains; disulfide-linked.

The protein localises to the secreted. It is found in the cell membrane. Its function is as follows. V region of the variable domain of immunoglobulin light chains that participates in the antigen recognition. Immunoglobulins, also known as antibodies, are membrane-bound or secreted glycoproteins produced by B lymphocytes. In the recognition phase of humoral immunity, the membrane-bound immunoglobulins serve as receptors which, upon binding of a specific antigen, trigger the clonal expansion and differentiation of B lymphocytes into immunoglobulins-secreting plasma cells. Secreted immunoglobulins mediate the effector phase of humoral immunity, which results in the elimination of bound antigens. The antigen binding site is formed by the variable domain of one heavy chain, together with that of its associated light chain. Thus, each immunoglobulin has two antigen binding sites with remarkable affinity for a particular antigen. The variable domains are assembled by a process called V-(D)-J rearrangement and can then be subjected to somatic hypermutations which, after exposure to antigen and selection, allow affinity maturation for a particular antigen. This chain is Immunoglobulin kappa variable 2D-28, found in Homo sapiens (Human).